Consider the following 276-residue polypeptide: Elongation factor Ts, mitochondrial (276 aa).

Belongs to the EF-Ts family.

It is found in the mitochondrion. Functionally, associates with the EF-Tu.GDP complex and induces the exchange of GDP to GTP. It remains bound to the aminoacyl-tRNA.EF-Tu.GTP complex up to the GTP hydrolysis stage on the ribosome. The chain is Elongation factor Ts, mitochondrial from Leishmania braziliensis.